Here is a 151-residue protein sequence, read N- to C-terminus: MSSFSTTTVSFLLLLAFQLLGQTRANPMYNAVSNADLMDFKNLLDHLEEKMPLEDEVVPPQVLSEPNEEAGAALSPLPEVPPWTGEVSPAQRDGGALGRGPWDSSDRSALLKSKLRALLTAPRSLRRSSCFGGRMDRIGAQSGLGCNSFRY.

The signal sequence occupies residues 1-25 (MSSFSTTTVSFLLLLAFQLLGQTRA). The tract at residues 62–105 (VLSEPNEEAGAALSPLPEVPPWTGEVSPAQRDGGALGRGPWDSS) is disordered. The propeptide occupies 93–103 (DGGALGRGPWD). Ser129 carries the post-translational modification Phosphoserine. Cys130 and Cys146 form a disulfide bridge. The important for degradation of atrial natriuretic peptide by IDE stretch occupies residues 147–151 (NSFRY).

This sequence belongs to the natriuretic peptide family. In terms of assembly, homodimer; disulfide-linked antiparallel dimer. Post-translationally, the precursor molecule is proteolytically cleaved by CORIN at Arg-123 to produce atrial natriuretic peptide. Undergoes further proteolytic cleavage by unknown proteases to give rise to long-acting natriuretic peptide, vessel dilator and kaliuretic peptide. Additional processing gives rise to the auriculin and atriopeptin peptides. In the kidneys, alternative processing by an unknown protease results in the peptide urodilatin. Cleavage by MME initiates degradation of the factor and thereby regulates its activity. Degraded by IDE (in vitro). During IDE degradation, the resulting products can temporarily stimulate NPR2 to produce cGMP, before the fragments are completely degraded and inactivated by IDE (in vitro). In terms of processing, degraded by IDE. Post-translationally, phosphorylation on Ser-129 decreases vasorelaxant activity. Detected in the kidney distal tubular cells (at protein level). Present in urine (at protein level). As to expression, detected in atrial and ventricular plasma samples, and in adipocytes (at protein level). Detected in urine in one study. However, was not detected in urine in another study. In the brain, predominantly expressed in the gray matter with very weak expression in the white matter (at protein level). Localizes to astrocyte-like structures throughout the white matter, and in the cerebral vessels detected in the leptomeningeal and parenchymal vessels, and endothelium and smooth muscle layers (at protein level). Relatively low levels of expression in the kidneys compared to urodilatin (at protein level).

It localises to the secreted. Its subcellular location is the perikaryon. The protein localises to the cell projection. Its function is as follows. Hormone that plays a key role in mediating cardio-renal homeostasis, and is involved in vascular remodeling and regulating energy metabolism. Acts by specifically binding and stimulating NPR1 to produce cGMP, which in turn activates effector proteins, such as PRKG1, that drive various biological responses. Regulates vasodilation, natriuresis, diuresis and aldosterone synthesis and is therefore essential for regulating blood pressure, controlling the extracellular fluid volume and maintaining the fluid-electrolyte balance. Also involved in inhibiting cardiac remodeling and cardiac hypertrophy by inducing cardiomyocyte apoptosis and attenuating the growth of cardiomyocytes and fibroblasts. Plays a role in female pregnancy by promoting trophoblast invasion and spiral artery remodeling in uterus, and thus prevents pregnancy-induced hypertension. In adipose tissue, acts in various cGMP- and PKG-dependent pathways to regulate lipid metabolism and energy homeostasis. This includes up-regulating lipid metabolism and mitochondrial oxygen utilization by activating the AMP-activated protein kinase (AMPK), and increasing energy expenditure by acting via MAPK11 to promote the UCP1-dependent thermogenesis of brown adipose tissue. Binds the clearance receptor NPR3 which removes the hormone from circulation. May have a role in cardio-renal homeostasis through regulation of natriuresis, diuresis, vasodilation, and inhibiting aldosterone synthesis. In vitro, promotes the production of cGMP and induces vasodilation. May promote natriuresis, at least in part, by enhancing prostaglandin E2 synthesis resulting in the inhibition of renal Na+-K+-ATPase. However reports on the involvement of this peptide in mammal blood volume and blood pressure homeostasis are conflicting; according to a report, in vivo it is not sufficient to activate cGMP and does not inhibit collecting duct transport nor effect diuresis and natriuresis. Appears to bind to specific receptors that are distinct from the receptors bound by atrial natriuretic peptide and vessel dilator. Possibly enhances protein excretion in urine by decreasing proximal tubular protein reabsorption. Functionally, may have a role in cardio-renal homeostasis through regulation of natriuresis, diuresis, and vasodilation. In vitro, promotes the production of cGMP and induces vasodilation. May promote natriuresis, at least in part, by enhancing prostaglandin E2 synthesis resulting in the inhibition of renal Na+-K+-ATPase. However reports on the involvement of this peptide in mammal blood volume and blood pressure homeostasis are conflicting; according to a report it is not sufficient to activate cGMP and does not inhibit collecting duct transport nor effect diuresis and natriuresis. Appears to bind to specific receptors that are distinct from the receptors bound by the atrial natriuretic and long-acting natriuretic peptides. Possibly functions in protein excretion in urine by maintaining the integrity of the proximal tubules and enhancing protein excretion by decreasing proximal tubular protein reabsorption. In terms of biological role, may have a role in cardio-renal homeostasis through regulation of diuresis and inhibiting aldosterone synthesis. In vitro, promotes the production of cGMP and induces vasodilation. May promote natriuresis, at least in part, by enhancing prostaglandin E2 synthesis resulting in the inhibition of renal Na+-K+-ATPase. May have a role in potassium excretion but not sodium excretion (natriuresis). Possibly enhances protein excretion in urine by decreasing proximal tubular protein reabsorption. Its function is as follows. Hormone produced in the kidneys that appears to be important for maintaining cardio-renal homeostasis. Mediates vasodilation, natriuresis and diuresis primarily in the renal system, in order to maintain the extracellular fluid volume and control the fluid-electrolyte balance. Specifically binds and stimulates cGMP production by renal transmembrane receptors, likely NPR1. Urodilatin not ANP, may be the natriuretic peptide responsible for the regulation of sodium and water homeostasis in the kidney. May have a role in cardio-renal homeostasis through regulation of natriuresis and vasodilation. In vivo promotes natriuresis and in vitro, vasodilates renal artery strips. Functionally, may have a role in cardio-renal homeostasis through regulation of regulation of natriuresis and vasodilation. In vivo promotes natriuresis. In vitro, vasodilates intestinal smooth muscle but not smooth muscle strips. In terms of biological role, may have a role in cardio-renal homeostasis through regulation of natriuresis and vasodilation. In vivo promotes natriuresis. In vitro, selectively vasodilates intestinal and vascular smooth muscle strips. Its function is as follows. May have a role in cardio-renal homeostasis through regulation of natriuresis and vasodilation. In vivo promotes natriuresis. In vitro, selectively vasodilates intestinal smooth muscle but not vascular smooth muscle strips. In Homo sapiens (Human), this protein is Natriuretic peptides A (NPPA).